A 543-amino-acid chain; its full sequence is Chaperonin GroEL (543 aa).

Residues 29–32 (TIGP), 86–90 (DGTTT), Gly413, 478–480 (NAA), and Asp494 each bind ATP.

It belongs to the chaperonin (HSP60) family. Forms a cylinder of 14 subunits composed of two heptameric rings stacked back-to-back. Interacts with the co-chaperonin GroES.

The protein resides in the cytoplasm. The catalysed reaction is ATP + H2O + a folded polypeptide = ADP + phosphate + an unfolded polypeptide.. Functionally, together with its co-chaperonin GroES, plays an essential role in assisting protein folding. The GroEL-GroES system forms a nano-cage that allows encapsulation of the non-native substrate proteins and provides a physical environment optimized to promote and accelerate protein folding. The chain is Chaperonin GroEL from Limosilactobacillus fermentum (strain NBRC 3956 / LMG 18251) (Lactobacillus fermentum).